We begin with the raw amino-acid sequence, 513 residues long: 2-isopropylmalate synthase (513 aa).

Residues Ile-4–Tyr-268 enclose the Pyruvate carboxyltransferase domain. Mn(2+) is bound by residues Asp-13, His-203, His-205, and Asn-239. Residues Lys-392–Glu-513 form a regulatory domain region.

The protein belongs to the alpha-IPM synthase/homocitrate synthase family. LeuA type 1 subfamily. Homodimer. Requires Mn(2+) as cofactor.

The protein localises to the cytoplasm. It carries out the reaction 3-methyl-2-oxobutanoate + acetyl-CoA + H2O = (2S)-2-isopropylmalate + CoA + H(+). Its pathway is amino-acid biosynthesis; L-leucine biosynthesis; L-leucine from 3-methyl-2-oxobutanoate: step 1/4. Functionally, catalyzes the condensation of the acetyl group of acetyl-CoA with 3-methyl-2-oxobutanoate (2-ketoisovalerate) to form 3-carboxy-3-hydroxy-4-methylpentanoate (2-isopropylmalate). This chain is 2-isopropylmalate synthase, found in Thermotoga petrophila (strain ATCC BAA-488 / DSM 13995 / JCM 10881 / RKU-1).